The sequence spans 402 residues: Phosphoglycerate kinase (402 aa).

Substrate-binding positions include 30–32, R46, 70–73, R126, and R159; these read DFN and HLGR. Residues K210, E332, and 358 to 361 each bind ATP; that span reads GGDT.

This sequence belongs to the phosphoglycerate kinase family. In terms of assembly, monomer.

Its subcellular location is the cytoplasm. The catalysed reaction is (2R)-3-phosphoglycerate + ATP = (2R)-3-phospho-glyceroyl phosphate + ADP. It functions in the pathway carbohydrate degradation; glycolysis; pyruvate from D-glyceraldehyde 3-phosphate: step 2/5. This chain is Phosphoglycerate kinase, found in Helicobacter hepaticus (strain ATCC 51449 / 3B1).